A 252-amino-acid chain; its full sequence is Triosephosphate isomerase (252 aa).

11 to 13 (NWK) provides a ligand contact to substrate. H97 (electrophile) is an active-site residue. E169 (proton acceptor) is an active-site residue. Residues G175, S215, and 236 to 237 (GG) each bind substrate.

This sequence belongs to the triosephosphate isomerase family. Homodimer.

The protein localises to the cytoplasm. It carries out the reaction D-glyceraldehyde 3-phosphate = dihydroxyacetone phosphate. It participates in carbohydrate biosynthesis; gluconeogenesis. It functions in the pathway carbohydrate degradation; glycolysis; D-glyceraldehyde 3-phosphate from glycerone phosphate: step 1/1. Involved in the gluconeogenesis. Catalyzes stereospecifically the conversion of dihydroxyacetone phosphate (DHAP) to D-glyceraldehyde-3-phosphate (G3P). The sequence is that of Triosephosphate isomerase from Mycoplasmoides gallisepticum (strain R(low / passage 15 / clone 2)) (Mycoplasma gallisepticum).